The sequence spans 212 residues: Translation initiation factor IF-3 (212 aa).

The segment at 171-212 (PKSASKKGHTPPKTQVEASKQANESAETEEEKKRCHPTKPVL) is disordered. The segment covering 182-195 (PKTQVEASKQANES) has biased composition (polar residues).

The protein belongs to the IF-3 family. In terms of assembly, monomer.

It is found in the cytoplasm. IF-3 binds to the 30S ribosomal subunit and shifts the equilibrium between 70S ribosomes and their 50S and 30S subunits in favor of the free subunits, thus enhancing the availability of 30S subunits on which protein synthesis initiation begins. This is Translation initiation factor IF-3 from Porphyromonas gingivalis (strain ATCC 33277 / DSM 20709 / CIP 103683 / JCM 12257 / NCTC 11834 / 2561).